We begin with the raw amino-acid sequence, 78 residues long: Large ribosomal subunit protein bL28 (78 aa).

Residues 1 to 21 (MSRVCQVTGKRPMSGNNRSHA) are disordered.

Belongs to the bacterial ribosomal protein bL28 family.

This is Large ribosomal subunit protein bL28 from Photorhabdus laumondii subsp. laumondii (strain DSM 15139 / CIP 105565 / TT01) (Photorhabdus luminescens subsp. laumondii).